The following is a 353-amino-acid chain: Photosystem II protein D1 (353 aa).

Position 2 is an N-acetylthreonine (Thr2). Position 2 is a phosphothreonine (Thr2). Transmembrane regions (helical) follow at residues 29–46 (YIGWFGVLMIPTLLTATS), 118–133 (HFLLGVACYMGREWEL), and 142–156 (WIAVAYSAPVAAATA). His118 serves as a coordination point for chlorophyll a. Residue Tyr126 coordinates pheophytin a. The [CaMn4O5] cluster site is built by Asp170 and Glu189. Residues 197 to 218 (FHMLGVAGVFGGSLFSAMHGSL) traverse the membrane as a helical segment. Position 198 (His198) interacts with chlorophyll a. A quinone contacts are provided by residues His215 and 264-265 (SF). His215 is a Fe cation binding site. His272 is a Fe cation binding site. Residues 274–288 (FLAAWPVVGIWFTAL) form a helical membrane-spanning segment. [CaMn4O5] cluster-binding residues include His332, Glu333, Asp342, and Ala344. Residues 345–353 (ALEVPSLNG) constitute a propeptide that is removed on maturation.

This sequence belongs to the reaction center PufL/M/PsbA/D family. In terms of assembly, PSII is composed of 1 copy each of membrane proteins PsbA, PsbB, PsbC, PsbD, PsbE, PsbF, PsbH, PsbI, PsbJ, PsbK, PsbL, PsbM, PsbT, PsbX, PsbY, PsbZ, Psb30/Ycf12, at least 3 peripheral proteins of the oxygen-evolving complex and a large number of cofactors. It forms dimeric complexes. The D1/D2 heterodimer binds P680, chlorophylls that are the primary electron donor of PSII, and subsequent electron acceptors. It shares a non-heme iron and each subunit binds pheophytin, quinone, additional chlorophylls, carotenoids and lipids. D1 provides most of the ligands for the Mn4-Ca-O5 cluster of the oxygen-evolving complex (OEC). There is also a Cl(-1) ion associated with D1 and D2, which is required for oxygen evolution. The PSII complex binds additional chlorophylls, carotenoids and specific lipids. is required as a cofactor. In terms of processing, tyr-161 forms a radical intermediate that is referred to as redox-active TyrZ, YZ or Y-Z. Post-translationally, C-terminally processed by CTPA; processing is essential to allow assembly of the oxygen-evolving complex and thus photosynthetic growth.

It localises to the plastid. The protein localises to the chloroplast thylakoid membrane. The enzyme catalyses 2 a plastoquinone + 4 hnu + 2 H2O = 2 a plastoquinol + O2. In terms of biological role, photosystem II (PSII) is a light-driven water:plastoquinone oxidoreductase that uses light energy to abstract electrons from H(2)O, generating O(2) and a proton gradient subsequently used for ATP formation. It consists of a core antenna complex that captures photons, and an electron transfer chain that converts photonic excitation into a charge separation. The D1/D2 (PsbA/PsbD) reaction center heterodimer binds P680, the primary electron donor of PSII as well as several subsequent electron acceptors. The polypeptide is Photosystem II protein D1 (Lolium perenne (Perennial ryegrass)).